The following is a 264-amino-acid chain: Cell division protein FtsQ (264 aa).

The tract at residues 1–24 (MAGPTTAERGARQQESSGPPRVRR) is disordered. At 1-32 (MAGPTTAERGARQQESSGPPRVRRFRPPRLRT) the chain is on the cytoplasmic side. Residues 33-53 (IIILAVALVLVAGGTVWVLYG) traverse the membrane as a helical segment. Residues 54–264 (SNWTRLERVS…VATAPASSGS (211 aa)) lie on the Extracellular side of the membrane. The region spanning 57–126 (TRLERVSVSG…HGIGLKVTER (70 aa)) is the POTRA domain.

This sequence belongs to the FtsQ/DivIB family. FtsQ subfamily.

The protein resides in the cell membrane. Functionally, essential cell division protein. The chain is Cell division protein FtsQ from Streptomyces coelicolor (strain ATCC BAA-471 / A3(2) / M145).